Here is a 639-residue protein sequence, read N- to C-terminus: Protein artemis (639 aa).

Disordered regions lie at residues 450 to 496 (MDCT…LTSS), 515 to 570 (SELE…SQVD), and 590 to 617 (EAAE…VPQP). The span at 454 to 466 (ESNDDDDDEDDAA) shows a compositional bias: acidic residues. Residues 518–537 (ENSQNTQTLSTENTASQSPE) are compositionally biased toward polar residues. Low complexity predominate over residues 548-560 (VHMSSSQSTHISD).

Belongs to the DNA repair metallo-beta-lactamase (DRMBL) family.

The protein resides in the nucleus. Functionally, may have a role in the processing of DNA double strand breaks (DSBs) prior to their repair by the non homologous end joining (NHEJ) pathway. Probably exhibits both exonuclease and endonuclease activity. This is Protein artemis (dclre1c) from Danio rerio (Zebrafish).